Here is a 145-residue protein sequence, read N- to C-terminus: Large ribosomal subunit protein uL15 (145 aa).

Residues 1–52 (MFNLLKPKGASKRRKIVGRGPGSGLGKTSGRGQKGQKARNTSPRLGFEGGQT) are disordered. The span at 19 to 33 (RGPGSGLGKTSGRGQ) shows a compositional bias: gly residues.

This sequence belongs to the universal ribosomal protein uL15 family. Part of the 50S ribosomal subunit.

Binds to the 23S rRNA. The sequence is that of Large ribosomal subunit protein uL15 from Borreliella burgdorferi (strain ATCC 35210 / DSM 4680 / CIP 102532 / B31) (Borrelia burgdorferi).